Reading from the N-terminus, the 344-residue chain is UDP-galactose/UDP-glucose transporter 5B (344 aa).

A run of 8 helical transmembrane segments spans residues 16–36 (LWKG…YGVL), 56–76 (LFLV…ALLA), 115–135 (VQTL…TLIM), 142–162 (FDYL…LFPA), 176–196 (TVWG…TSTF), 220–240 (CVLS…VDFV), 246–266 (CLLD…FISY), and 292–312 (CIWF…IVFG). Residues 324–344 (KNSQTQPPPPELPQYEKVESS) are disordered.

This sequence belongs to the nucleotide-sugar transporter family. UDP-galactose:UMP antiporter (TC 2.A.7.11) subfamily.

It is found in the membrane. Sugar transporter involved in the transport of nucleotide-sugars from cytoplasm into the Golgi and/or the endoplasmic reticulum. The polypeptide is UDP-galactose/UDP-glucose transporter 5B (Arabidopsis thaliana (Mouse-ear cress)).